The chain runs to 70 residues: Large ribosomal subunit protein eL43 (70 aa).

Zn(2+)-binding residues include Cys36, Cys39, Cys55, and Cys58. Residues 36–58 (CPVCKTTGKVVRIASGVWYCKKC) form a C4-type zinc finger.

The protein belongs to the eukaryotic ribosomal protein eL43 family. Putative zinc-binding subfamily. Part of the 50S ribosomal subunit. Zn(2+) is required as a cofactor.

Functionally, binds to the 23S rRNA. This is Large ribosomal subunit protein eL43 from Sulfurisphaera tokodaii (strain DSM 16993 / JCM 10545 / NBRC 100140 / 7) (Sulfolobus tokodaii).